Reading from the N-terminus, the 150-residue chain is UPF0178 protein Bcen2424_1660 (150 aa).

The protein belongs to the UPF0178 family.

This Burkholderia cenocepacia (strain HI2424) protein is UPF0178 protein Bcen2424_1660.